The following is a 181-amino-acid chain: Oligoribonuclease (181 aa).

Residues 8–171 (LIWIDLEMTG…QDIQESIAEL (164 aa)) enclose the Exonuclease domain. Residue tyrosine 129 is part of the active site.

It belongs to the oligoribonuclease family.

It localises to the cytoplasm. Functionally, 3'-to-5' exoribonuclease specific for small oligoribonucleotides. The chain is Oligoribonuclease from Shewanella sp. (strain ANA-3).